Reading from the N-terminus, the 165-residue chain is 3-isopropylmalate dehydratase small subunit (165 aa).

The protein belongs to the LeuD family. LeuD type 2 subfamily. Heterodimer of LeuC and LeuD.

The catalysed reaction is (2R,3S)-3-isopropylmalate = (2S)-2-isopropylmalate. The protein operates within amino-acid biosynthesis; L-leucine biosynthesis; L-leucine from 3-methyl-2-oxobutanoate: step 2/4. Functionally, catalyzes the isomerization between 2-isopropylmalate and 3-isopropylmalate, via the formation of 2-isopropylmaleate. This Desulfovibrio desulfuricans (strain ATCC 27774 / DSM 6949 / MB) protein is 3-isopropylmalate dehydratase small subunit.